An 866-amino-acid chain; its full sequence is Glycoprotein gp2 (866 aa).

A signal peptide spans 1–25; the sequence is MGFIYARKLLLCMAVSIYAIGSTTT. Disordered regions lie at residues 24 to 185 and 319 to 619; these read TTTE…TDTT and TAAT…IVPQ. N-linked (GlcNAc...) asparagine; by host glycosylation occurs at N48. The segment covering 319–442 has biased composition (low complexity); that stretch reads TAATTTAATT…PDSSTGSTST (124 aa). Residues 443 to 463 show a composition bias toward polar residues; that stretch reads AEPSSTFTLTPSTATPSTDQF. 2 stretches are compositionally biased toward low complexity: residues 464-499 and 514-526; these read TGSS…EAST and TPDG…NTTP. N518 carries N-linked (GlcNAc...) asparagine; by host glycosylation. The span at 535-561 shows a compositional bias: polar residues; that stretch reads FADTQQTPDNGVSTQHTTINDHTTANA. Basic residues predominate over residues 564-574; it reads HAGHHRGRAGG. Residues N611 and N659 are each glycosylated (N-linked (GlcNAc...) asparagine; by host). Residues 835–855 traverse the membrane as a helical segment; sequence FALVAATTLTVTILCLLCCLY.

The protein localises to the virion membrane. Virulence factor. In Equus caballus (Horse), this protein is Glycoprotein gp2.